A 510-amino-acid polypeptide reads, in one-letter code: Secreted RxLR effector protein 108 (510 aa).

The first 20 residues, methionine 1–alanine 20, serve as a signal peptide directing secretion. The N-linked (GlcNAc...) asparagine glycan is linked to asparagine 47. The short motif at arginine 48–arginine 65 is the RxLR-dEER element. Disordered regions lie at residues arginine 111–threonine 139 and lysine 386–lysine 442. The segment covering proline 122 to lysine 137 has biased composition (basic residues). Residues aspartate 393 to glutamine 405 are compositionally biased toward polar residues. Residues valine 429 to lysine 442 show a composition bias toward basic and acidic residues.

This sequence belongs to the RxLR effector family.

Its subcellular location is the secreted. It localises to the host nucleus. In terms of biological role, secreted effector that completely suppresses the host cell death induced by cell death-inducing proteins. The polypeptide is Secreted RxLR effector protein 108 (Plasmopara viticola (Downy mildew of grapevine)).